Here is a 505-residue protein sequence, read N- to C-terminus: Deoxyguanosinetriphosphate triphosphohydrolase (505 aa).

One can recognise an HD domain in the interval 66–273; sequence RLTHSMEVQQ…MEAADDISYC (208 aa).

The protein belongs to the dGTPase family. Type 1 subfamily. In terms of assembly, homotetramer. Requires Mg(2+) as cofactor.

The catalysed reaction is dGTP + H2O = 2'-deoxyguanosine + triphosphate + H(+). In terms of biological role, dGTPase preferentially hydrolyzes dGTP over the other canonical NTPs. This chain is Deoxyguanosinetriphosphate triphosphohydrolase, found in Escherichia coli O7:K1 (strain IAI39 / ExPEC).